A 226-amino-acid polypeptide reads, in one-letter code: uncharacterized protein (226 aa).

Residues 1-112 (MLVEDDHSIS…ELTARVKAAI (112 aa)) enclose the Response regulatory domain. A 4-aspartylphosphate modification is found at Asp-48. A DNA-binding region (ompR/PhoB-type) is located at residues 126 to 225 (NKVIRIHQLA…LWGIGYKLGE (100 aa)).

Post-translationally, phosphorylated by YcbM.

The protein localises to the cytoplasm. Member of the two-component regulatory system YcbM/YcbL. This is an uncharacterized protein from Bacillus subtilis (strain 168).